Reading from the N-terminus, the 72-residue chain is BBSome-interacting protein 1 (72 aa).

This sequence belongs to the BBIP10 family.

The protein resides in the cell projection. The protein localises to the cilium. Its subcellular location is the cytoplasm. Its function is as follows. Required for primary cilia assembly. This is BBSome-interacting protein 1 (bbip1) from Danio rerio (Zebrafish).